We begin with the raw amino-acid sequence, 189 residues long: GMP synthase [glutamine-hydrolyzing] subunit A (189 aa).

The region spanning 3-187 (RIDVIDNHGQ…LSVCDQQSVA (185 aa)) is the Glutamine amidotransferase type-1 domain. The active-site Nucleophile is the Cys73. Residues His161 and Glu163 contribute to the active site.

Heterodimer composed of a glutamine amidotransferase subunit (A) and a GMP-binding subunit (B).

The catalysed reaction is XMP + L-glutamine + ATP + H2O = GMP + L-glutamate + AMP + diphosphate + 2 H(+). Its pathway is purine metabolism; GMP biosynthesis; GMP from XMP (L-Gln route): step 1/1. In terms of biological role, catalyzes the synthesis of GMP from XMP. This is GMP synthase [glutamine-hydrolyzing] subunit A from Haloarcula marismortui (strain ATCC 43049 / DSM 3752 / JCM 8966 / VKM B-1809) (Halobacterium marismortui).